The chain runs to 299 residues: Protein tantalus (299 aa).

Positions 16 to 100 (KDNRSPTTNS…RSSTFGARAG (85 aa)) are disordered. Polar residues predominate over residues 20–35 (SPTTNSNLSWQLNQMA). A compositionally biased stretch (acidic residues) spans 53 to 69 (ESDDNVSSESHDSDDVD). A compositionally biased stretch (low complexity) spans 84-93 (CISGSSRRSS). Phosphoserine is present on residues S204 and S264.

Binds to DNA in vitro. Interacts directly with Asx. As to expression, ubiquitously expressed in precellularized embryos. Then it decreases at cellular blastoderm to increase again during germ band extension. During germ band extension, it is highly expressed in somatic and visceral mesoderm. Ubiquitously expressed in imaginal disks. In ovary, it is expressed from stage 10.

The protein resides in the nucleus. Its subcellular location is the cytoplasm. The protein localises to the chromosome. Its function is as follows. Potential cofactor involved in sensory organ development. Despite its interaction with the Polycomb group protein Asx, it does not regulate the expression of homeotic genes. In Drosophila melanogaster (Fruit fly), this protein is Protein tantalus.